The chain runs to 130 residues: Small ribosomal subunit protein uS11 (130 aa).

The protein belongs to the universal ribosomal protein uS11 family. In terms of assembly, part of the 30S ribosomal subunit. Interacts with proteins S7 and S18. Binds to IF-3.

Functionally, located on the platform of the 30S subunit, it bridges several disparate RNA helices of the 16S rRNA. Forms part of the Shine-Dalgarno cleft in the 70S ribosome. The protein is Small ribosomal subunit protein uS11 of Pseudoalteromonas atlantica (strain T6c / ATCC BAA-1087).